A 304-amino-acid polypeptide reads, in one-letter code: Oxidoreductase calM (304 aa).

4 residues coordinate NADP(+): isoleucine 26, threonine 45, aspartate 68, and asparagine 98. The Proton donor role is filled by serine 152. NADP(+)-binding residues include tyrosine 166, lysine 170, valine 200, and threonine 202. Residue tyrosine 166 is the Proton acceptor of the active site. The active-site Lowers pKa of active site Tyr is lysine 170.

The protein belongs to the short-chain dehydrogenases/reductases (SDR) family.

The protein operates within secondary metabolite biosynthesis. In terms of biological role, oxidoreductase; part of the gene cluster that mediates the biosynthesis of calbistrin A and related compounds. Calbistrin A is a secondary metabolite with an interesting structure that was recently found to have bioactivity against leukemia cells. It consists of two polyketides linked by an ester bond: a bicyclic decalin containing polyketide and a linear 12 carbon dioic acid structure. The polyketide synthase calA is probably responsible for forming the decalin moiety. Because calA lacks a designated enoylreductase (ER) domain, the required activity is provided by the trans-enoyl reductase calK. Following release from the PKS, calF then probably catalyzes the oxidation and the subsequent Diels Alder cycloisomerization that lead to the formation of the decalin moiety. The decalin polyketide backbone includes two C-methyl groups, at C7 and C11 in backbone, of which the C7 position is probably methylated by the methyltransferase domain of calA. A candidate for adding the methyl group at C11, if not done by CalA, is the cluster methyltransferase calH. Several additional tailoring enzymes within the cluster could be involved in the modification of the decalin polyketide product. Those include the 3 cytochrome P450 monooxygenases CalE, CalG and CalL, of which one might be responsible for the introduction of the extra hydroxyl group attached to the backbone of the decalin moiety, at position C9 in the backbone, that allows for attachment of the linear moiety. One tailoring enzyme activity that is expected to be involved in biosynthesis of calbistrin is an acyltransferase for connecting the two polyketide synthase products, and which could be performed by the cluster acyltransferase calJ. The enzyme responsible for the biosynthesis of the linear moiety, probably a second PKS, has not been identified yet. The protein is Oxidoreductase calM of Penicillium decumbens.